The chain runs to 341 residues: Uroporphyrinogen decarboxylase (341 aa).

Substrate contacts are provided by residues 26–30 (RQAGR), aspartate 75, tyrosine 150, serine 205, and histidine 318.

It belongs to the uroporphyrinogen decarboxylase family. In terms of assembly, homodimer.

Its subcellular location is the cytoplasm. The enzyme catalyses uroporphyrinogen III + 4 H(+) = coproporphyrinogen III + 4 CO2. It functions in the pathway porphyrin-containing compound metabolism; protoporphyrin-IX biosynthesis; coproporphyrinogen-III from 5-aminolevulinate: step 4/4. Catalyzes the decarboxylation of four acetate groups of uroporphyrinogen-III to yield coproporphyrinogen-III. The protein is Uroporphyrinogen decarboxylase of Thermus thermophilus (strain ATCC BAA-163 / DSM 7039 / HB27).